The following is an 832-amino-acid chain: Conserved oligomeric Golgi complex subunit 5 (832 aa).

2 stretches are compositionally biased toward pro residues: residues 1 to 11 (MALPPSSPSPS) and 23 to 38 (NPPP…PPQT). Residues 1–49 (MALPPSSPSPSSPSLQRLSTFKNPPPSSLSSGAPPPQTPSSSSSSPLDS) form a disordered region. Low complexity predominate over residues 39–49 (PSSSSSSPLDS).

It belongs to the COG5 family. As to quaternary structure, homodimer. Component of the conserved oligomeric Golgi complex which is composed of eight different subunits and is required for normal Golgi morphology and localization. Interacts with COG3, COG6, COG7 and COG8.

The protein localises to the golgi apparatus membrane. Its function is as follows. Required for normal Golgi function. This is Conserved oligomeric Golgi complex subunit 5 from Arabidopsis thaliana (Mouse-ear cress).